The sequence spans 95 residues: CRISPR-associated endoribonuclease Cas2 1 (95 aa).

Asp8 provides a ligand contact to Mg(2+).

The protein belongs to the CRISPR-associated endoribonuclease Cas2 protein family. Homodimer, forms a heterotetramer with a Cas1 homodimer. Mg(2+) is required as a cofactor.

Functionally, CRISPR (clustered regularly interspaced short palindromic repeat), is an adaptive immune system that provides protection against mobile genetic elements (viruses, transposable elements and conjugative plasmids). CRISPR clusters contain sequences complementary to antecedent mobile elements and target invading nucleic acids. CRISPR clusters are transcribed and processed into CRISPR RNA (crRNA). Functions as a ssRNA-specific endoribonuclease. Involved in the integration of spacer DNA into the CRISPR cassette. This Pyrobaculum aerophilum (strain ATCC 51768 / DSM 7523 / JCM 9630 / CIP 104966 / NBRC 100827 / IM2) protein is CRISPR-associated endoribonuclease Cas2 1.